The primary structure comprises 156 residues: MPDSSTQDKIVMIATDGACKGNPGFGGWGALLRYQGHEKAISGSENPTTNNRMELQAVIEALSCLKKPCQIELSTDSKYVMDGLTRWIHGWQKNGWLTAAKKPVKNADLWKQLLALTRQHDIAWKWVKGHAGHPDNERADQLASDAAIALMQQEKA.

The 142-residue stretch at 7–148 (QDKIVMIATD…ADQLASDAAI (142 aa)) folds into the RNase H type-1 domain. Mg(2+)-binding residues include aspartate 16, glutamate 54, aspartate 76, and aspartate 140.

This sequence belongs to the RNase H family. As to quaternary structure, monomer. It depends on Mg(2+) as a cofactor.

The protein localises to the cytoplasm. It carries out the reaction Endonucleolytic cleavage to 5'-phosphomonoester.. Endonuclease that specifically degrades the RNA of RNA-DNA hybrids. This Zymomonas mobilis subsp. mobilis (strain ATCC 31821 / ZM4 / CP4) protein is Ribonuclease H (rnhA).